The sequence spans 387 residues: 1-deoxy-D-xylulose 5-phosphate reductoisomerase (387 aa).

NADPH-binding residues include T10, G11, S12, V13, N38, and N119. K120 contributes to the 1-deoxy-D-xylulose 5-phosphate binding site. Residue E121 coordinates NADPH. Residue D145 participates in Mn(2+) binding. The 1-deoxy-D-xylulose 5-phosphate site is built by S146, E147, S170, and H193. Residue E147 coordinates Mn(2+). G199 lines the NADPH pocket. 4 residues coordinate 1-deoxy-D-xylulose 5-phosphate: S206, N211, K212, and E215. E215 is a Mn(2+) binding site.

Belongs to the DXR family. Requires Mg(2+) as cofactor. The cofactor is Mn(2+).

The catalysed reaction is 2-C-methyl-D-erythritol 4-phosphate + NADP(+) = 1-deoxy-D-xylulose 5-phosphate + NADPH + H(+). It functions in the pathway isoprenoid biosynthesis; isopentenyl diphosphate biosynthesis via DXP pathway; isopentenyl diphosphate from 1-deoxy-D-xylulose 5-phosphate: step 1/6. Catalyzes the NADPH-dependent rearrangement and reduction of 1-deoxy-D-xylulose-5-phosphate (DXP) to 2-C-methyl-D-erythritol 4-phosphate (MEP). This Wolbachia pipientis wMel protein is 1-deoxy-D-xylulose 5-phosphate reductoisomerase.